A 363-amino-acid chain; its full sequence is Peroxisomal (S)-2-hydroxyacid oxidase GLO4 (363 aa).

In terms of domain architecture, FMN hydroxy acid dehydrogenase spans methionine 1–glutamate 357. FMN-binding positions include proline 78–alanine 80, serine 107, glutamine 128–tyrosine 130, and threonine 156. Residue tyrosine 130 coordinates a 2-oxocarboxylate. Residue arginine 165 participates in a 2-oxocarboxylate binding. FMN contacts are provided by lysine 228 and serine 250. Histidine 252 serves as the catalytic Proton acceptor. Arginine 255 serves as a coordination point for a 2-oxocarboxylate. Residues aspartate 283–arginine 287 and glycine 306–arginine 307 each bind FMN. The short motif at serine 361 to leucine 363 is the Microbody targeting signal element.

Belongs to the FMN-dependent alpha-hydroxy acid dehydrogenase family. Homotetramer. FMN serves as cofactor.

Its subcellular location is the peroxisome. It catalyses the reaction a (2S)-2-hydroxycarboxylate + O2 = a 2-oxocarboxylate + H2O2. The enzyme catalyses 2-hydroxydodecanoate + O2 = 2-oxododecanoate + H2O2. It carries out the reaction 2-hydroxyhexanoate + O2 = 2-oxohexanoate + H2O2. The catalysed reaction is 2-hydroxyoctanoate + O2 = 2-oxooctanoate + H2O2. It catalyses the reaction (S)-lactate + O2 = pyruvate + H2O2. Its pathway is lipid metabolism; fatty acid metabolism. Its function is as follows. Oxidase that catalyzes the oxidation of a broad range of 2-hydroxyacids to the corresponding 2-oxoacids, with a reduction of O2 to H2O2. Displays the highest activity with the long-chain fatty acid 2-hydroxydodecanoate and has intermediate activity with 2-hydroxyhexanoate, 2-hydroxyoctanote, and the short-chain hydroxyacid (S)-lactate (L-lactate). With much lower activity, it can also use glycolate, leucic acid, valic acid, and isoleucic acid as substrates in vitro. Cannot use 2-hydroxyhexadecanoate or D-lactate as substrates. May be involved in a general medium- and long-chain fatty acid catabolic pathway such as alpha-oxidation. The polypeptide is Peroxisomal (S)-2-hydroxyacid oxidase GLO4 (GLO4) (Arabidopsis thaliana (Mouse-ear cress)).